Reading from the N-terminus, the 50-residue chain is Ampulexin 2 (50 aa).

An N-terminal signal peptide occupies residues 1 to 26; the sequence is MKAIMVLFYVMTLTIIGSFSMVSGSP.

As to quaternary structure, dimer; disulfide-linked. Expressed in venom sac and, to a lesser extent, in venom gland. Not expressed in brain.

Its subcellular location is the secreted. Amphipathic peptide which probably adopts an alpha-helical structure. Has no antimicrobial activity against E.coli DH5alpha or B.thuringiensis. Is not cytotoxic in vitro. This chain is Ampulexin 2, found in Ampulex compressa (Emerald cockroach wasp).